We begin with the raw amino-acid sequence, 403 residues long: Flavohemoprotein (403 aa).

Residues 1 to 138 (MLTQKTKDIV…LADVLMGMES (138 aa)) form the Globin domain. His85 serves as a coordination point for heme b. Residues Tyr95 and Glu137 each act as charge relay system in the active site. The reductase stretch occupies residues 149–403 (GGWKGWRTFV…EVFGPDLFAE (255 aa)). The FAD-binding FR-type domain maps to 152–262 (KGWRTFVIRE…AAPYGSFHID (111 aa)). FAD is bound by residues Tyr190 and 206–209 (RQYS). 275–280 (GVGLTP) is a binding site for NADP(+). 395 to 398 (VFGP) lines the FAD pocket.

It belongs to the globin family. Two-domain flavohemoproteins subfamily. The protein in the C-terminal section; belongs to the flavoprotein pyridine nucleotide cytochrome reductase family. As to quaternary structure, monomer. It depends on FAD as a cofactor. Requires heme b as cofactor.

The protein localises to the cytoplasm. It catalyses the reaction 2 nitric oxide + NADPH + 2 O2 = 2 nitrate + NADP(+) + H(+). The catalysed reaction is 2 nitric oxide + NADH + 2 O2 = 2 nitrate + NAD(+) + H(+). Functionally, is involved in NO detoxification in an aerobic process, termed nitric oxide dioxygenase (NOD) reaction that utilizes O(2) and NAD(P)H to convert NO to nitrate, which protects the bacterium from various noxious nitrogen compounds. Therefore, plays a central role in the inducible response to nitrosative stress. Its function is as follows. In the presence of oxygen and NADH, FHP has NADH oxidase activity, which leads to the generation of superoxide and H(2)O(2), both in vitro and in vivo, and it has been suggested that FHP might act as an amplifier of superoxide stress. Under anaerobic conditions, FHP also exhibits nitric oxide reductase and FAD reductase activities. However, all these reactions are much lower than NOD activity. The sequence is that of Flavohemoprotein (hmp) from Cupriavidus necator (strain ATCC 17699 / DSM 428 / KCTC 22496 / NCIMB 10442 / H16 / Stanier 337) (Ralstonia eutropha).